Consider the following 695-residue polypeptide: Lasso peptide isopeptidase AtxE2 (695 aa).

An N-terminal signal peptide occupies residues 1-30 (MRSSKIRCPGAIRVGTLVTAFGCLPHVAFA). Disulfide bonds link Cys296–Cys301 and Cys354–Cys363. Ser527 (nucleophile) is an active-site residue. A disulfide bridge connects residues Cys551 and Cys552. Residues Glu610 and His638 each act as charge relay system in the active site.

The protein localises to the cytoplasm. In terms of biological role, lasso peptide isopeptidase that specifically hydrolyzes Astexin-2 and Astexin-3, converting them to linear peptides. Has only a few specific contacts with substrates, because it recognizes Astexin knotted structure (principally the loop structure). Its binding to lasso peptides opens them to expose the isopeptide bonds for hydrolysis. This Asticcacaulis excentricus (strain ATCC 15261 / DSM 4724 / KCTC 12464 / NCIMB 9791 / VKM B-1370 / CB 48) protein is Lasso peptide isopeptidase AtxE2.